Consider the following 874-residue polypeptide: Leucine--tRNA ligase (874 aa).

The short motif at 43–53 (PYPSGRIHIGH) is the 'HIGH' region element. Positions 614–634 (LDDGSPVTVGPPEKMSKSKKN) are disordered. A 'KMSKS' region motif is present at residues 627 to 631 (KMSKS). Residue lysine 630 participates in ATP binding.

Belongs to the class-I aminoacyl-tRNA synthetase family.

The protein localises to the cytoplasm. It carries out the reaction tRNA(Leu) + L-leucine + ATP = L-leucyl-tRNA(Leu) + AMP + diphosphate. The sequence is that of Leucine--tRNA ligase from Azorhizobium caulinodans (strain ATCC 43989 / DSM 5975 / JCM 20966 / LMG 6465 / NBRC 14845 / NCIMB 13405 / ORS 571).